A 114-amino-acid chain; its full sequence is Pancreatic progenitor cell differentiation and proliferation factor (114 aa).

At serine 9 the chain carries Phosphoserine. 2 disordered regions span residues 22-47 (GSTS…PGLP) and 75-114 (AEHS…GPPS). Residues 23–33 (STSSNSSCSST) show a composition bias toward low complexity. Positions 102–114 (GGQSSTASAGPPS) are enriched in polar residues.

This sequence belongs to the PPDPF family.

Probable regulator of exocrine pancreas development. The chain is Pancreatic progenitor cell differentiation and proliferation factor (PPDPF) from Homo sapiens (Human).